A 142-amino-acid polypeptide reads, in one-letter code: Small ribosomal subunit protein uS9 (142 aa).

This sequence belongs to the universal ribosomal protein uS9 family.

The protein localises to the cytoplasm. This chain is Small ribosomal subunit protein uS9 (RPS16), found in Syntrichia ruralis (Great hairy screw-moss).